Here is a 299-residue protein sequence, read N- to C-terminus: Protoheme IX farnesyltransferase (299 aa).

The next 9 membrane-spanning stretches (helical) occupy residues 27-47, 53-73, 97-117, 121-141, 149-169, 175-195, 222-242, 244-264, and 273-293; these read VVAL…HEHF, LIAL…NHLI, FNVL…LMLW, LTAY…TLYL, IVIA…SITG, AWVL…ALAI, ILLY…VGMA, YLYL…AIKL, and AIEM…ALLL.

It belongs to the UbiA prenyltransferase family. Protoheme IX farnesyltransferase subfamily.

It localises to the cell inner membrane. It catalyses the reaction heme b + (2E,6E)-farnesyl diphosphate + H2O = Fe(II)-heme o + diphosphate. It functions in the pathway porphyrin-containing compound metabolism; heme O biosynthesis; heme O from protoheme: step 1/1. In terms of biological role, converts heme B (protoheme IX) to heme O by substitution of the vinyl group on carbon 2 of heme B porphyrin ring with a hydroxyethyl farnesyl side group. The sequence is that of Protoheme IX farnesyltransferase from Vibrio vulnificus (strain CMCP6).